We begin with the raw amino-acid sequence, 404 residues long: Glucoside xylosyltransferase 1 (404 aa).

Topologically, residues 1 to 6 (MRRYLR) are cytoplasmic. Residues 7 to 29 (VVGLCLACGFCSLLYAFSQLAVS) form a helical; Signal-anchor for type II membrane protein membrane-spanning segment. The Lumenal segment spans residues 30 to 404 (LEEGAAGGRR…NRYDTPPKER (375 aa)). A glycan (N-linked (GlcNAc...) asparagine) is linked at N201.

It belongs to the glycosyltransferase 8 family.

The protein localises to the membrane. It catalyses the reaction 3-O-(beta-D-glucosyl)-L-seryl-[EGF-like domain protein] + UDP-alpha-D-xylose = 3-O-[alpha-D-xylosyl-(1-&gt;3)-beta-D-glucosyl]-L-seryl-[EGF-like domain protein] + UDP + H(+). In terms of biological role, glycosyltransferase which elongates the O-linked glucose attached to EGF-like repeats in the extracellular domain of Notch proteins by catalyzing the addition of xylose. The sequence is that of Glucoside xylosyltransferase 1 (Gxylt1) from Mus musculus (Mouse).